The primary structure comprises 148 residues: Large ribosomal subunit protein uL15 (148 aa).

A disordered region spans residues 1–46 (MITIEDLKPTPGSNKKYKRLGRGQGSGKGKTAGKGHKGQKSRGTGK). A compositionally biased stretch (basic residues) spans 31-45 (TAGKGHKGQKSRGTG).

The protein belongs to the universal ribosomal protein uL15 family. Part of the 50S ribosomal subunit.

Functionally, binds to the 23S rRNA. The chain is Large ribosomal subunit protein uL15 from Fervidobacterium nodosum (strain ATCC 35602 / DSM 5306 / Rt17-B1).